The chain runs to 152 residues: Large ribosomal subunit protein bL9 (152 aa).

This sequence belongs to the bacterial ribosomal protein bL9 family.

Functionally, binds to the 23S rRNA. The protein is Large ribosomal subunit protein bL9 of Mycobacterium avium (strain 104).